A 382-amino-acid chain; its full sequence is MGIHGLAKLIADVAPAAIKEHDIKSYFGRKVAVDASMCIYQFLIAVRQDGNTLQNEEGETTSHLMGMFYRTIRMVEHGIKPVYVFDGKPPQMKSGELAKRSERRAEAEKLLEAAEEAGEVENIEKFTKRLVKVTKQHNEECKKLLTLMGIPYVDAPCEAEATCAALVKAGKVYAAATEDMDALTFGTPVLLRHLTASEAKKLPIQEFHLNRVIQDIGITHEQFVDLCILLGSDYCETIRGIGPKRAIDLIRQHKTIDEIIDNIDLKKYPVPENWLHKEAKHLFLEPEVVDTDITELKWIEPDEEGLVAFMCGEKQFSEDRIRNGAKKLAKNRQGSTQGRLDDFFKVTGSVSSTKRKEAESKGSAKKKAKTGGTPAGKFKRGK.

The tract at residues 1 to 104 is N-domain; it reads MGIHGLAKLI…GELAKRSERR (104 aa). D34 contacts Mg(2+). Residues R47 and R70 each coordinate DNA. The Mg(2+) site is built by D86, E158, E160, D179, and D181. Positions 122-253 are I-domain; that stretch reads NIEKFTKRLV…KRAIDLIRQH (132 aa). DNA is bound at residue E158. Residues G231 and D233 each contribute to the DNA site. Position 233 (D233) interacts with Mg(2+). An interaction with PCNA region spans residues 336–344; it reads TQGRLDDFF. The segment at 350–382 is disordered; the sequence is VSSTKRKEAESKGSAKKKAKTGGTPAGKFKRGK.

It belongs to the XPG/RAD2 endonuclease family. FEN1 subfamily. In terms of assembly, interacts with PCNA. Three molecules of fen1 bind to one PCNA trimer with each molecule binding to one PCNA monomer. PCNA stimulates the nuclease activity without altering cleavage specificity. Requires Mg(2+) as cofactor. Post-translationally, phosphorylated. Phosphorylation upon DNA damage induces relocalization to the nuclear plasma.

Its subcellular location is the nucleus. It localises to the nucleolus. The protein resides in the nucleoplasm. The protein localises to the mitochondrion. Its function is as follows. Structure-specific nuclease with 5'-flap endonuclease and 5'-3' exonuclease activities involved in DNA replication and repair. During DNA replication, cleaves the 5'-overhanging flap structure that is generated by displacement synthesis when DNA polymerase encounters the 5'-end of a downstream Okazaki fragment. It enters the flap from the 5'-end and then tracks to cleave the flap base, leaving a nick for ligation. Also involved in the long patch base excision repair (LP-BER) pathway, by cleaving within the apurinic/apyrimidinic (AP) site-terminated flap. Acts as a genome stabilization factor that prevents flaps from equilibrating into structures that lead to duplications and deletions. Also possesses 5'-3' exonuclease activity on nicked or gapped double-stranded DNA, and exhibits RNase H activity. Also involved in replication and repair of rDNA and in repairing mitochondrial DNA. This Xenopus laevis (African clawed frog) protein is Flap endonuclease 1-A (fen1-a).